We begin with the raw amino-acid sequence, 197 residues long: Imidazoleglycerol-phosphate dehydratase (197 aa).

It belongs to the imidazoleglycerol-phosphate dehydratase family.

Its subcellular location is the cytoplasm. The enzyme catalyses D-erythro-1-(imidazol-4-yl)glycerol 3-phosphate = 3-(imidazol-4-yl)-2-oxopropyl phosphate + H2O. It functions in the pathway amino-acid biosynthesis; L-histidine biosynthesis; L-histidine from 5-phospho-alpha-D-ribose 1-diphosphate: step 6/9. The chain is Imidazoleglycerol-phosphate dehydratase from Stutzerimonas stutzeri (strain A1501) (Pseudomonas stutzeri).